The sequence spans 299 residues: Hydrogenase maturation factor HypB (299 aa).

3 residues coordinate Ni(2+): Cys2, Cys5, and Cys7. The disordered stretch occupies residues 18 to 57 (EVGDDGHGHHHHDGHHDHDHDHDHHRGDHEHDDHHHAEDG). Basic and acidic residues predominate over residues 31-57 (GHHDHDHDHDHHRGDHEHDDHHHAEDG). Residues 107–268 (ALNFVSSPGS…LRVNPRLQTL (162 aa)) are G-domain. Residues Cys167, His168, and Cys199 each contribute to the Ni(2+) site. Cys167, His168, and Cys199 together coordinate Zn(2+).

The protein belongs to the SIMIBI class G3E GTPase family. HypB/HupM subfamily.

Its function is as follows. Involved in the maturation of [NiFe] hydrogenases. Required for nickel insertion into the metal center of the hydrogenase. Exhibits a low intrinsic GTPase activity, which is essential for nickel insertion. Is able to bind 4 nickel ions per subunit. Can also bind zinc. The chain is Hydrogenase maturation factor HypB from Rhizobium leguminosarum bv. viciae.